A 384-amino-acid chain; its full sequence is L-cysteine:1D-myo-inositol 2-amino-2-deoxy-alpha-D-glucopyranoside ligase (384 aa).

Cysteine 16 is a binding site for Zn(2+). L-cysteinyl-5'-AMP contacts are provided by residues 16-19, threonine 31, and 54-56; these read CGIT and NVT. The 'HIGH' region signature appears at 18 to 28; it reads ITPYDATHLGH. Positions 159 to 164 match the 'ERGGDP' region motif; the sequence is QSGGDP. Tryptophan 199 contributes to the L-cysteinyl-5'-AMP binding site. Cysteine 203 is a Zn(2+) binding site. 221 to 223 provides a ligand contact to L-cysteinyl-5'-AMP; sequence GSD. Histidine 228 is a binding site for Zn(2+). Isoleucine 255 is an L-cysteinyl-5'-AMP binding site. The short motif at 261 to 265 is the 'KMSKS' region element; that stretch reads KMSKS.

This sequence belongs to the class-I aminoacyl-tRNA synthetase family. MshC subfamily. Monomer. Requires Zn(2+) as cofactor.

It catalyses the reaction 1D-myo-inositol 2-amino-2-deoxy-alpha-D-glucopyranoside + L-cysteine + ATP = 1D-myo-inositol 2-(L-cysteinylamino)-2-deoxy-alpha-D-glucopyranoside + AMP + diphosphate + H(+). Functionally, catalyzes the ATP-dependent condensation of GlcN-Ins and L-cysteine to form L-Cys-GlcN-Ins. The sequence is that of L-cysteine:1D-myo-inositol 2-amino-2-deoxy-alpha-D-glucopyranoside ligase from Mycobacterium leprae (strain Br4923).